Here is a 241-residue protein sequence, read N- to C-terminus: Probable xyloglucan-specific endo-beta-1,4-glucanase A (241 aa).

The signal sequence occupies residues 1 to 18 (MKFNLALALSLTVATAEA).

It belongs to the glycosyl hydrolase 12 (cellulase H) family.

It is found in the secreted. The enzyme catalyses xyloglucan + H2O = xyloglucan oligosaccharides.. In terms of biological role, catalyzes endohydrolysis of 1,4-beta-D-glucosidic linkages in xyloglucan with retention of the beta-configuration of the glycosyl residues. Specific for xyloglucan and does not hydrolyze other cell wall components. This Aspergillus clavatus (strain ATCC 1007 / CBS 513.65 / DSM 816 / NCTC 3887 / NRRL 1 / QM 1276 / 107) protein is Probable xyloglucan-specific endo-beta-1,4-glucanase A (xgeA).